Reading from the N-terminus, the 122-residue chain is UPF0382 membrane protein SH2409 (122 aa).

4 helical membrane-spanning segments follow: residues Leu-3–Ala-23, Met-46–Val-66, Ala-69–Leu-89, and Ile-98–Phe-118.

This sequence belongs to the UPF0382 family.

The protein resides in the cell membrane. This chain is UPF0382 membrane protein SH2409, found in Staphylococcus haemolyticus (strain JCSC1435).